A 92-amino-acid chain; its full sequence is Small ribosomal subunit protein uS19c (92 aa).

Belongs to the universal ribosomal protein uS19 family.

It is found in the plastid. The protein resides in the chloroplast. Protein S19 forms a complex with S13 that binds strongly to the 16S ribosomal RNA. The sequence is that of Small ribosomal subunit protein uS19c from Psilotum nudum (Whisk fern).